The following is a 456-amino-acid chain: Arginine biosynthesis bifunctional protein ArgJ, mitochondrial (456 aa).

The substrate site is built by Thr184, Lys213, Thr224, Glu311, Asn451, and Thr456. Thr224 acts as the Nucleophile in catalysis.

This sequence belongs to the ArgJ family. As to quaternary structure, heterodimer of an alpha and a beta chain. In terms of processing, the alpha and beta chains are autoproteolytically processed from a single precursor protein within the mitochondrion.

The protein localises to the mitochondrion matrix. The enzyme catalyses N(2)-acetyl-L-ornithine + L-glutamate = N-acetyl-L-glutamate + L-ornithine. The catalysed reaction is L-glutamate + acetyl-CoA = N-acetyl-L-glutamate + CoA + H(+). It functions in the pathway amino-acid biosynthesis; L-arginine biosynthesis; L-ornithine and N-acetyl-L-glutamate from L-glutamate and N(2)-acetyl-L-ornithine (cyclic): step 1/1. The protein operates within amino-acid biosynthesis; L-arginine biosynthesis; N(2)-acetyl-L-ornithine from L-glutamate: step 1/4. Catalyzes two activities which are involved in the cyclic version of arginine biosynthesis: the synthesis of acetylglutamate from glutamate and acetyl-CoA, and of ornithine by transacetylation between acetylornithine and glutamate. This chain is Arginine biosynthesis bifunctional protein ArgJ, mitochondrial, found in Neosartorya fischeri (strain ATCC 1020 / DSM 3700 / CBS 544.65 / FGSC A1164 / JCM 1740 / NRRL 181 / WB 181) (Aspergillus fischerianus).